A 338-amino-acid chain; its full sequence is Nicotinate-nucleotide--dimethylbenzimidazole phosphoribosyltransferase (338 aa).

E306 serves as the catalytic Proton acceptor.

Belongs to the CobT family.

It catalyses the reaction 5,6-dimethylbenzimidazole + nicotinate beta-D-ribonucleotide = alpha-ribazole 5'-phosphate + nicotinate + H(+). The protein operates within nucleoside biosynthesis; alpha-ribazole biosynthesis; alpha-ribazole from 5,6-dimethylbenzimidazole: step 1/2. Its function is as follows. Catalyzes the synthesis of alpha-ribazole-5'-phosphate from nicotinate mononucleotide (NAMN) and 5,6-dimethylbenzimidazole (DMB). This chain is Nicotinate-nucleotide--dimethylbenzimidazole phosphoribosyltransferase, found in Cereibacter sphaeroides (strain KD131 / KCTC 12085) (Rhodobacter sphaeroides).